Consider the following 341-residue polypeptide: Ribosomal RNA small subunit methyltransferase C (341 aa).

Belongs to the methyltransferase superfamily. RsmC family. As to quaternary structure, monomer.

The protein resides in the cytoplasm. It carries out the reaction guanosine(1207) in 16S rRNA + S-adenosyl-L-methionine = N(2)-methylguanosine(1207) in 16S rRNA + S-adenosyl-L-homocysteine + H(+). In terms of biological role, specifically methylates the guanine in position 1207 of 16S rRNA in the 30S particle. The sequence is that of Ribosomal RNA small subunit methyltransferase C from Pseudoalteromonas translucida (strain TAC 125).